Here is an 853-residue protein sequence, read N- to C-terminus: DNA mismatch repair protein MutS (853 aa).

614–621 (GPNMGGKS) lines the ATP pocket.

The protein belongs to the DNA mismatch repair MutS family.

In terms of biological role, this protein is involved in the repair of mismatches in DNA. It is possible that it carries out the mismatch recognition step. This protein has a weak ATPase activity. This Escherichia coli O157:H7 (strain EC4115 / EHEC) protein is DNA mismatch repair protein MutS.